The following is a 217-amino-acid chain: Small ribosomal subunit protein uS3 (217 aa).

Residues 38–106 enclose the KH type-2 domain; sequence IRKFIQKELA…QVHINIIEIK (69 aa).

Belongs to the universal ribosomal protein uS3 family. Part of the 30S ribosomal subunit. Forms a tight complex with proteins S10 and S14.

Binds the lower part of the 30S subunit head. Binds mRNA in the 70S ribosome, positioning it for translation. The sequence is that of Small ribosomal subunit protein uS3 from Streptococcus uberis (strain ATCC BAA-854 / 0140J).